Reading from the N-terminus, the 149-residue chain is Nucleoside diphosphate kinase (149 aa).

ATP contacts are provided by K9, F57, R85, T91, R102, and N112. H115 acts as the Pros-phosphohistidine intermediate in catalysis.

This sequence belongs to the NDK family. As to quaternary structure, homotetramer. Requires Mg(2+) as cofactor.

The protein resides in the cytoplasm. The enzyme catalyses dZDP + ATP = dZTP + ADP. It catalyses the reaction a 2'-deoxyribonucleoside 5'-diphosphate + ATP = a 2'-deoxyribonucleoside 5'-triphosphate + ADP. It carries out the reaction a ribonucleoside 5'-diphosphate + ATP = a ribonucleoside 5'-triphosphate + ADP. Its pathway is purine metabolism. In terms of biological role, major role in the synthesis of nucleoside triphosphates other than ATP. The ATP gamma phosphate is transferred to the NDP beta phosphate via a ping-pong mechanism, using a phosphorylated active-site intermediate. Functionally, (Microbial infection) Catalyzes the phosphorylation of dZDP to dZTP, when the bacterium is infected by a phage that produces the substrate for the synthesis of dZTP (2- amino-2'-deoxyadenosine 5'-triphosphate), which is then used by the phage as a DNA polymerase substrate. The chain is Nucleoside diphosphate kinase from Synechococcus sp. (strain JA-3-3Ab) (Cyanobacteria bacterium Yellowstone A-Prime).